The following is a 493-amino-acid chain: Cytoplasmic tRNA 2-thiolation protein 2 (493 aa).

A Phosphoserine modification is found at Ser489.

Belongs to the CTU2/NCS2 family. Interacts with NCS6 and URM1. May act by forming a heterodimer with NCS6.

Its subcellular location is the cytoplasm. The protein operates within tRNA modification; 5-methoxycarbonylmethyl-2-thiouridine-tRNA biosynthesis. Functionally, plays a central role in 2-thiolation of mcm(5)S(2)U at tRNA wobble positions of tRNA(Lys), tRNA(Glu) and tRNA(Gln). May act by forming a heterodimer with NCS6 that ligates sulfur from thiocarboxylated URM1 onto the uridine of tRNAs at wobble position. Prior mcm(5) tRNA modification by the elongator complex is required for 2-thiolation. May also be involved in protein urmylation. The sequence is that of Cytoplasmic tRNA 2-thiolation protein 2 from Saccharomyces cerevisiae (strain AWRI1631) (Baker's yeast).